The chain runs to 368 residues: Endophilin-A2 (368 aa).

The tract at residues 1 to 21 (MSVAGLKKQFYKASQLVSEKV) is membrane-binding amphipathic helix. Residues 18 to 249 (SEKVGGAEGT…LKRRMREASS (232 aa)) enclose the BAR domain. Residues 60–87 (PNPASRAKLTMLNTVSKIRGQVKNPGYP) form a required for dimerization upon membrane association region. A coiled-coil region spans residues 145-250 (NLCEKDLKEI…KRRMREASSR (106 aa)). The interval 218-254 (LVDAQLDYHRQAVQILDELAEKLKRRMREASSRPKRE) is interaction with ARC. Residues 244–308 (MREASSRPKR…PSRSMPPLDQ (65 aa)) are disordered. Positions 245–263 (REASSRPKREYKPKPREPF) are enriched in basic and acidic residues. Serine 288 and serine 292 each carry phosphoserine. The residue at position 298 (threonine 298) is a Phosphothreonine. In terms of domain architecture, SH3 spans 306–365 (LDQPSCKALYDFEPENDGELGFHEGDVITLTNQIDENWYEGMLDGQSGFFPLSYVEVLVP). Tyrosine 315 is subject to Phosphotyrosine.

It belongs to the endophilin family. Interacts with ARC. Interacts with SYNJ1 and DNM1. Interacts with PDCD6IP. Interacts with BIN2. As to expression, ubiquitous. Higher expression in pancreas, placenta, prostate, testis and uterus.

It localises to the cytoplasm. The protein resides in the early endosome membrane. Its subcellular location is the cell projection. It is found in the podosome. Implicated in endocytosis. May recruit other proteins to membranes with high curvature. The sequence is that of Endophilin-A2 (SH3GL1) from Homo sapiens (Human).